The sequence spans 171 residues: Phosphinothricin N-acetyltransferase (171 aa).

Positions 7–171 (VQVRPGVEED…WDVAWYERPL (165 aa)) constitute an N-acetyltransferase domain. Acetyl-CoA contacts are provided by residues 94–96 (VYV), 102–107 (GRGIGS), and Asn-133.

It belongs to the acetyltransferase family. PAT/BAR subfamily.

It carries out the reaction phosphinothricin + acetyl-CoA = N-acetylphosphinothricin + CoA + H(+). Inactivates phosphinothricin (PPT) by transfer of an acetyl group from acetyl CoA. The physiological substrate could be a structurally related compound. The chain is Phosphinothricin N-acetyltransferase from Streptomyces coelicolor (strain ATCC BAA-471 / A3(2) / M145).